Here is a 29-residue protein sequence, read N- to C-terminus: Cysteine-rich venom protein 25-A (29 aa).

The protein belongs to the CRISP family. Post-translationally, contains 8 disulfide bonds. In terms of tissue distribution, expressed by the venom gland.

It localises to the secreted. The chain is Cysteine-rich venom protein 25-A from Naja haje haje (Egyptian cobra).